We begin with the raw amino-acid sequence, 286 residues long: Putative 2-aminoethylphosphonate transport system permease protein PhnU (286 aa).

A run of 6 helical transmembrane segments spans residues tryptophan 19–valine 39, phenylalanine 76–isoleucine 96, phenylalanine 111–glycine 131, phenylalanine 150–methionine 170, valine 202–threonine 222, and tyrosine 254–leucine 274. Positions leucine 68–tyrosine 275 constitute an ABC transmembrane type-1 domain.

Belongs to the binding-protein-dependent transport system permease family.

Its subcellular location is the cell inner membrane. Its function is as follows. Probably part of the PhnSTUV complex (TC 3.A.1.11.5) involved in 2-aminoethylphosphonate import. Probably responsible for the translocation of the substrate across the membrane. This chain is Putative 2-aminoethylphosphonate transport system permease protein PhnU (phnU), found in Salmonella choleraesuis (strain SC-B67).